Reading from the N-terminus, the 1194-residue chain is DNA polymerase catalytic subunit (1194 aa).

This sequence belongs to the DNA polymerase type-B family. As to quaternary structure, forms a complex with the ssDNA-binding protein, the DNA polymerase processivity factor, and the alkaline exonuclease. Interacts with the helicase-primase complex composed of the primase, the helicase and the primase-associated factor; this interaction may coordinate leading and lagging strand DNA synthesis at the replication fork.

The protein resides in the host nucleus. The enzyme catalyses DNA(n) + a 2'-deoxyribonucleoside 5'-triphosphate = DNA(n+1) + diphosphate. It catalyses the reaction Endonucleolytic cleavage to 5'-phosphomonoester.. Replicates viral genomic DNA. The replication complex is composed of six viral proteins: the DNA polymerase, processivity factor, primase, primase-associated factor, helicase, and ssDNA-binding protein. Additionally, the polymerase contains an intrinsic ribonuclease H (RNase H) activity that specifically degrades RNA/DNA heteroduplexes or duplex DNA substrates in the 5' to 3' direction. Therefore, it can catalyze the excision of the RNA primers that initiate the synthesis of Okazaki fragments at a replication fork during viral DNA replication. The chain is DNA polymerase catalytic subunit from Varicella-zoster virus (strain Oka vaccine) (HHV-3).